Here is a 319-residue protein sequence, read N- to C-terminus: tRNA uridine(34) hydroxylase (319 aa).

A Rhodanese domain is found at 124–218; the sequence is LDEDTVILDA…YGKNEETKGE (95 aa). Cys-178 serves as the catalytic Cysteine persulfide intermediate.

Belongs to the TrhO family.

The enzyme catalyses uridine(34) in tRNA + AH2 + O2 = 5-hydroxyuridine(34) in tRNA + A + H2O. In terms of biological role, catalyzes oxygen-dependent 5-hydroxyuridine (ho5U) modification at position 34 in tRNAs. In Listeria welshimeri serovar 6b (strain ATCC 35897 / DSM 20650 / CCUG 15529 / CIP 8149 / NCTC 11857 / SLCC 5334 / V8), this protein is tRNA uridine(34) hydroxylase.